A 980-amino-acid polypeptide reads, in one-letter code: Phosphoenolpyruvate carboxylase (980 aa).

Catalysis depends on residues histidine 182 and lysine 625.

It belongs to the PEPCase type 1 family. It depends on Mg(2+) as a cofactor.

The catalysed reaction is oxaloacetate + phosphate = phosphoenolpyruvate + hydrogencarbonate. In terms of biological role, forms oxaloacetate, a four-carbon dicarboxylic acid source for the tricarboxylic acid cycle. This chain is Phosphoenolpyruvate carboxylase, found in Bordetella pertussis (strain Tohama I / ATCC BAA-589 / NCTC 13251).